The following is a 146-amino-acid chain: Flagellar assembly factor FliW (146 aa).

It belongs to the FliW family. In terms of assembly, interacts with translational regulator CsrA and flagellin(s).

It localises to the cytoplasm. Functionally, acts as an anti-CsrA protein, binds CsrA and prevents it from repressing translation of its target genes, one of which is flagellin. Binds to flagellin and participates in the assembly of the flagellum. The polypeptide is Flagellar assembly factor FliW (Shouchella clausii (strain KSM-K16) (Alkalihalobacillus clausii)).